A 174-amino-acid polypeptide reads, in one-letter code: 3-hydroxydecanoyl-[acyl-carrier-protein] dehydratase (174 aa).

Residue His71 is part of the active site.

This sequence belongs to the thioester dehydratase family. FabA subfamily. Homodimer.

The protein localises to the cytoplasm. It carries out the reaction a (3R)-hydroxyacyl-[ACP] = a (2E)-enoyl-[ACP] + H2O. The enzyme catalyses (3R)-hydroxydecanoyl-[ACP] = (2E)-decenoyl-[ACP] + H2O. It catalyses the reaction (2E)-decenoyl-[ACP] = (3Z)-decenoyl-[ACP]. It participates in lipid metabolism; fatty acid biosynthesis. Necessary for the introduction of cis unsaturation into fatty acids. Catalyzes the dehydration of (3R)-3-hydroxydecanoyl-ACP to E-(2)-decenoyl-ACP and then its isomerization to Z-(3)-decenoyl-ACP. Can catalyze the dehydratase reaction for beta-hydroxyacyl-ACPs with saturated chain lengths up to 16:0, being most active on intermediate chain length. This chain is 3-hydroxydecanoyl-[acyl-carrier-protein] dehydratase, found in Nitrobacter hamburgensis (strain DSM 10229 / NCIMB 13809 / X14).